We begin with the raw amino-acid sequence, 157 residues long: Snaclec EMS16 subunit alpha (157 aa).

An N-terminal signal peptide occupies residues 1-23; that stretch reads MGRFISVSFGLLVVFLSLSGTGA. 3 disulfides stabilise this stretch: C27–C38, C55–C152, and C127–C144. The region spanning 34-153 is the C-type lectin domain; sequence YDQHCYLAIG…CEDLYPFVCK (120 aa).

It belongs to the snaclec family. In terms of assembly, heterodimer of subunits A and B; disulfide-linked. In terms of tissue distribution, expressed by the venom gland.

It localises to the secreted. Functionally, EMS16 is a potent and selective inhibitor of alpha-2/beta-1 (ITGA2/ITGB1) integrin and acts as a potent antagonist of platelet aggregation and cell migration. Binds specifically to the I domain of the alpha-2 subunit, in a metal ion-independent fashion. This Echis multisquamatus (Central Asian sand viper) protein is Snaclec EMS16 subunit alpha.